The primary structure comprises 96 residues: Co-chaperonin GroES (96 aa).

This sequence belongs to the GroES chaperonin family. Heptamer of 7 subunits arranged in a ring. Interacts with the chaperonin GroEL.

The protein localises to the cytoplasm. Its function is as follows. Together with the chaperonin GroEL, plays an essential role in assisting protein folding. The GroEL-GroES system forms a nano-cage that allows encapsulation of the non-native substrate proteins and provides a physical environment optimized to promote and accelerate protein folding. GroES binds to the apical surface of the GroEL ring, thereby capping the opening of the GroEL channel. The protein is Co-chaperonin GroES of Wolbachia pipientis wMel.